Here is a 127-residue protein sequence, read N- to C-terminus: Major sperm protein 49 (127 aa).

Ala2 carries the post-translational modification N-acetylalanine. Residues 9-126 (DIQTQPGTKI…RRKNLPIEYN (118 aa)) form the MSP domain.

Sperm.

It localises to the cell projection. The protein localises to the pseudopodium. It is found in the cytoplasm. The protein resides in the cytoskeleton. Functionally, central component in molecular interactions underlying sperm crawling. Forms an extensive filament system that extends from sperm villipoda, along the leading edge of the pseudopod. In Caenorhabditis elegans, this protein is Major sperm protein 49 (msp-49).